The sequence spans 309 residues: Homoserine O-succinyltransferase (309 aa).

The active-site Acyl-thioester intermediate is the C142. Substrate is bound by residues K163 and S192. H235 (proton acceptor) is an active-site residue. E237 is an active-site residue. A substrate-binding site is contributed by R249.

Belongs to the MetA family.

Its subcellular location is the cytoplasm. The catalysed reaction is L-homoserine + succinyl-CoA = O-succinyl-L-homoserine + CoA. The protein operates within amino-acid biosynthesis; L-methionine biosynthesis via de novo pathway; O-succinyl-L-homoserine from L-homoserine: step 1/1. Transfers a succinyl group from succinyl-CoA to L-homoserine, forming succinyl-L-homoserine. This is Homoserine O-succinyltransferase from Erwinia tasmaniensis (strain DSM 17950 / CFBP 7177 / CIP 109463 / NCPPB 4357 / Et1/99).